The primary structure comprises 260 residues: 14-3-3 protein 4 (260 aa).

Residues 238-260 are disordered; it reads DNADDVGDDIKEASKPESGEGQQ. Basic and acidic residues predominate over residues 245 to 260; the sequence is DDIKEASKPESGEGQQ.

Belongs to the 14-3-3 family. Homodimer.

The sequence is that of 14-3-3 protein 4 (TFT4) from Solanum lycopersicum (Tomato).